Consider the following 651-residue polypeptide: Probable potassium transport system protein Kup (651 aa).

The next 12 helical transmembrane spans lie at 30 to 50, 71 to 91, 124 to 144, 158 to 178, 190 to 210, 233 to 253, 268 to 288, 310 to 330, 358 to 378, 387 to 407, 413 to 433, and 437 to 457; these read LALAALGIVFGDIGTSVLYSL, IISMIFWSILLVVCVKYVIFV, LLLGIVGAGLFYGDSFITPAI, PDAEKIVLPASVVILTLLFIV, FGPVMATWFLTLAALGIPWII, AMAFIAMGAVVLTITGAEALY, WFGLVLPCLLINYLGQGAMIL, LVTIATMATVIASQAVISGAF, IYIPEVNWTLFIGVLALILIF, AYGLAVTGTFLLTTSLFLVLA, WPMWALIFFGVIVGGVELSIF, and LLKIASGGWIPLLFATIVVII.

The protein belongs to the HAK/KUP transporter (TC 2.A.72) family.

It is found in the cell membrane. It carries out the reaction K(+)(in) + H(+)(in) = K(+)(out) + H(+)(out). Functionally, transport of potassium into the cell. Likely operates as a K(+):H(+) symporter. This is Probable potassium transport system protein Kup from Cutibacterium acnes (strain DSM 16379 / KPA171202) (Propionibacterium acnes).